A 1136-amino-acid chain; its full sequence is Tyrosine-protein kinase receptor Tie-1 (1136 aa).

The signal sequence occupies residues 1–23 (MVWLEPPLLLPIFFLASHVGAAV). The Extracellular portion of the chain corresponds to 24–757 (DLTLLADLRL…IHAAEEGLDQ (734 aa)). One can recognise an Ig-like C2-type 1 domain in the interval 43–106 (CVSGEAGAGR…PSDLVGVFSC (64 aa)). Residues Asn84 and Asn159 are each glycosylated (N-linked (GlcNAc...) asparagine). 3 consecutive EGF-like domains span residues 212 to 254 (GCEA…TRCE), 256 to 301 (ACRE…SQCQ), and 303 to 343 (ACAP…MHCE). 3 disulfides stabilise this stretch: Cys226-Cys235, Cys229-Cys242, and Cys244-Cys253. Disulfide bonds link Cys317/Cys325, Cys319/Cys331, and Cys333/Cys342. An Ig-like C2-type 2 domain is found at 370–424 (CAAAGNPFPVRGSMELRKPDGTVLLSTKAIVEPDRTTAEFEVPRLALGDSGLWEC). 3 Fibronectin type-III domains span residues 444–543 (PPVP…CPEP), 546–640 (KPWL…LPPS), and 644–737 (APRH…TLGN). N-linked (GlcNAc...) asparagine glycans are attached at residues Asn501, Asn594, and Asn707. The helical transmembrane segment at 758–782 (QLVLAVVGSVSATCLTILAALLTLA) threads the bilayer. Over 783-1136 (CIRKSCLHRR…AGIDATAEEA (354 aa)) the chain is Cytoplasmic. The Protein kinase domain occupies 837–1116 (ITFEDLIGEG…RMLEARKAYV (280 aa)). ATP-binding positions include 843 to 851 (IGEGNFGQV) and Lys868. Asp977 acts as the Proton acceptor in catalysis. A Phosphotyrosine; by autocatalysis modification is found at Tyr1005.

The protein belongs to the protein kinase superfamily. Tyr protein kinase family. Tie subfamily. In terms of assembly, heterodimer with TEK/TIE2. Interacts with SVEP1 (via C-terminus). In terms of processing, phosphorylated on tyrosine residues in response to ANGPT1, most likely by TEK/TIE2. As to expression, specifically expressed in developing vascular endothelial cells.

Its subcellular location is the cell membrane. The enzyme catalyses L-tyrosyl-[protein] + ATP = O-phospho-L-tyrosyl-[protein] + ADP + H(+). In terms of biological role, transmembrane tyrosine-protein kinase that may modulate TEK/TIE2 activity and contribute to the regulation of angiogenesis. The sequence is that of Tyrosine-protein kinase receptor Tie-1 (TIE1) from Bos taurus (Bovine).